We begin with the raw amino-acid sequence, 441 residues long: Glutamyl-tRNA reductase (441 aa).

Residues Thr-49 to Arg-52, Ser-110, Glu-115 to Gln-117, and Gln-121 each bind substrate. Catalysis depends on Cys-50, which acts as the Nucleophile. Residue Gly-190–Ala-195 coordinates NADP(+).

This sequence belongs to the glutamyl-tRNA reductase family. As to quaternary structure, homodimer.

It catalyses the reaction (S)-4-amino-5-oxopentanoate + tRNA(Glu) + NADP(+) = L-glutamyl-tRNA(Glu) + NADPH + H(+). Its pathway is porphyrin-containing compound metabolism; protoporphyrin-IX biosynthesis; 5-aminolevulinate from L-glutamyl-tRNA(Glu): step 1/2. In terms of biological role, catalyzes the NADPH-dependent reduction of glutamyl-tRNA(Glu) to glutamate 1-semialdehyde (GSA). The protein is Glutamyl-tRNA reductase of Sulfurihydrogenibium sp. (strain YO3AOP1).